Consider the following 57-residue polypeptide: UPF0391 membrane protein BRADO5617 (57 aa).

The next 2 membrane-spanning stretches (helical) occupy residues 1 to 21 (MLGW…LGFG) and 30 to 50 (IAKI…VVGL).

The protein belongs to the UPF0391 family.

It is found in the cell membrane. The polypeptide is UPF0391 membrane protein BRADO5617 (Bradyrhizobium sp. (strain ORS 278)).